Reading from the N-terminus, the 388-residue chain is MSLDINWSLLSQPDESATDQLSESLIALLNAQLAEAHRPSFIGPITVTAFDFGNAGPDLEVKDIRDVWRVFDQGDDEGDFAEEEKQREKEREERDKLRNEALKSSLDGERYELVDRYSSTEGTSSFEYQPEYDIHEQHGDDYRIRGRRPLSYTFGYPHDRLAVHRSSSSRSFIPFPFDHPPPALHIPSTPGLNPSLVSHPISARFSRRPMSIAASAAPRPTPRRRPIEPSSTSPSPPAHPAGLPPKVSSSSIPSLQLHLRLSHASDLHLTLLTSLQVNYPSALFMALPLKLSITGFQLNADIVMAYSGEKNRVHLTIVDDESNPAHKEDKQIPLGQRLLSNLQIESEIGHADAHVLRNVGKVERFIVDVVRKTLVDELVFPNFHTVAL.

The SMP-LTD domain occupies 1 to 388 (MSLDINWSLL…VFPNFHTVAL (388 aa)). 2 disordered regions span residues 75-101 (DDEG…RNEA) and 209-249 (PMSI…KVSS). Residues 83 to 101 (EEKQREKEREERDKLRNEA) are compositionally biased toward basic and acidic residues. The segment covering 234–243 (PSPPAHPAGL) has biased composition (pro residues).

The protein belongs to the MDM12 family. As to quaternary structure, component of the ER-mitochondria encounter structure (ERMES) or MDM complex, composed of MMM1, MDM10, MDM12 and MDM34. An MMM1 homodimer associates with one molecule of MDM12 on each side in a pairwise head-to-tail manner, and the SMP-LTD domains of MMM1 and MDM12 generate a continuous hydrophobic tunnel for phospholipid trafficking.

The protein localises to the mitochondrion outer membrane. It localises to the endoplasmic reticulum membrane. Component of the ERMES/MDM complex, which serves as a molecular tether to connect the endoplasmic reticulum (ER) and mitochondria. Components of this complex are involved in the control of mitochondrial shape and protein biogenesis, and function in nonvesicular lipid trafficking between the ER and mitochondria. MDM12 is required for the interaction of the ER-resident membrane protein MMM1 and the outer mitochondrial membrane-resident beta-barrel protein MDM10. The MDM12-MMM1 subcomplex functions in the major beta-barrel assembly pathway that is responsible for biogenesis of all mitochondrial outer membrane beta-barrel proteins, and acts in a late step after the SAM complex. The MDM10-MDM12-MMM1 subcomplex further acts in the TOM40-specific pathway after the action of the MDM12-MMM1 complex. Essential for establishing and maintaining the structure of mitochondria and maintenance of mtDNA nucleoids. This Cryptococcus neoformans var. neoformans serotype D (strain JEC21 / ATCC MYA-565) (Filobasidiella neoformans) protein is Mitochondrial distribution and morphology protein 12.